A 334-amino-acid polypeptide reads, in one-letter code: AA9 family lytic polysaccharide monooxygenase A (334 aa).

An N-terminal signal peptide occupies residues 1-22; that stretch reads MSPSFKSTAILGAVALAARVRA. Cu(2+) contacts are provided by H23 and H108. 2 disulfides stabilise this stretch: C78/C200 and C119/C123. N160 is a glycosylation site (N-linked (GlcNAc...) asparagine). Residues H186 and Q195 each coordinate O2. Y197 provides a ligand contact to Cu(2+). Residue N208 is glycosylated (N-linked (GlcNAc...) asparagine). Residues 244-304 are disordered; the sequence is GPALYTGGSS…PSPSLPVEIP (61 aa). Residues 249 to 265 are compositionally biased toward low complexity; the sequence is TGGSSPSPNPPTSTQSP.

Belongs to the polysaccharide monooxygenase AA9 family. Requires Cu(2+) as cofactor.

The protein resides in the secreted. It carries out the reaction [(1-&gt;4)-beta-D-glucosyl]n+m + reduced acceptor + O2 = 4-dehydro-beta-D-glucosyl-[(1-&gt;4)-beta-D-glucosyl]n-1 + [(1-&gt;4)-beta-D-glucosyl]m + acceptor + H2O.. Functionally, lytic polysaccharide monooxygenase (LPMO) that depolymerizes crystalline and amorphous polysaccharides via the oxidation of scissile alpha- or beta-(1-4)-glycosidic bonds, yielding C1 or C4 oxidation products. Catalysis by LPMOs requires the reduction of the active-site copper from Cu(II) to Cu(I) by a reducing agent and H(2)O(2) or O(2) as a cosubstrate. Active on hemicelluloses, including xylan, glucomannan, and xyloglucan. Shows clear activity on cellooligosaccharides, generating C4 oxidation products. Also displays activity on konjac glucomannan (KGM), a linear beta-1,4-linked mannan with randomly distributed glucosyl residues; as well as trace activity on lichenan, a linear beta-1,3-beta-1,4-glucan with a 1:2 ratio of beta-1,3 to beta-1,4 linkages. Has no activity on ivory nut mannan (INM), a linear beta-1,4-linked mannan without substitutions. The chain is AA9 family lytic polysaccharide monooxygenase A from Malbranchea cinnamomea (Thermophilic fungus).